We begin with the raw amino-acid sequence, 888 residues long: Lon protease homolog 2, peroxisomal (888 aa).

Residues 11–255 enclose the Lon N-terminal domain; the sequence is LAILPFRNKV…KATELVDRHL (245 aa). ATP is bound at residue 408–415; sequence GPPGVGKT. The Lon proteolytic domain maps to 692–877; it reads VASAGVSVGL…EDVLENAFEG (186 aa). Active-site residues include S783 and K826. The short motif at 886-888 is the Microbody targeting signal element; that stretch reads SKL.

The protein belongs to the peptidase S16 family.

It is found in the peroxisome matrix. It carries out the reaction Hydrolysis of proteins in presence of ATP.. Functionally, ATP-dependent serine protease that mediates the selective degradation of misfolded and unassembled polypeptides in the peroxisomal matrix. Necessary for type 2 peroxisome targeting signal (PTS2)-containing protein processing and facilitates peroxisome matrix protein import. The protein is Lon protease homolog 2, peroxisomal (LON2) of Arabidopsis thaliana (Mouse-ear cress).